Consider the following 446-residue polypeptide: Methylenetetrahydrofolate--tRNA-(uracil-5-)-methyltransferase TrmFO (446 aa).

8–13 (GAGLAG) provides a ligand contact to FAD.

Belongs to the MnmG family. TrmFO subfamily. Requires FAD as cofactor.

It is found in the cytoplasm. It catalyses the reaction uridine(54) in tRNA + (6R)-5,10-methylene-5,6,7,8-tetrahydrofolate + NADH + H(+) = 5-methyluridine(54) in tRNA + (6S)-5,6,7,8-tetrahydrofolate + NAD(+). It carries out the reaction uridine(54) in tRNA + (6R)-5,10-methylene-5,6,7,8-tetrahydrofolate + NADPH + H(+) = 5-methyluridine(54) in tRNA + (6S)-5,6,7,8-tetrahydrofolate + NADP(+). Catalyzes the folate-dependent formation of 5-methyl-uridine at position 54 (M-5-U54) in all tRNAs. This Paracoccus denitrificans (strain Pd 1222) protein is Methylenetetrahydrofolate--tRNA-(uracil-5-)-methyltransferase TrmFO.